Consider the following 101-residue polypeptide: Acylphosphatase-1 (101 aa).

Serine 2 carries the post-translational modification N-acetylserine. Serine 2 bears the N-acetylalanine mark. Residues 11–101 (SVDYEIFGKV…LDYTDFQIVK (91 aa)) enclose the Acylphosphatase-like domain. Residues arginine 26 and asparagine 44 contribute to the active site.

The protein belongs to the acylphosphatase family. Organ-common type isozyme is found in many different tissues.

It carries out the reaction an acyl phosphate + H2O = a carboxylate + phosphate + H(+). The sequence is that of Acylphosphatase-1 (ACYP1) from Bos taurus (Bovine).